The following is a 449-amino-acid chain: Tripartite motif-containing protein 64 (449 aa).

The RING-type zinc-finger motif lies at 15–56 (CCICVNYFIDPVTIDCGHSFCRPCLCLCSEEGRAPMRCPSCR). The B box-type zinc-finger motif lies at 87–128 (SSDNICVLHEETKELFCEADKRLLCGPCSESPEHMAHSHSPI). Cysteine 92, histidine 95, cysteine 114, and histidine 120 together coordinate Zn(2+). Positions 189–225 (LDEEEQRHLQALEREAEELFQQLQDSQVRMTQHLERM) form a coiled coil. Residues 269 to 449 (LTSWCITGVL…LRPFFCFGCT (181 aa)) form the B30.2/SPRY domain.

This sequence belongs to the TRIM/RBCC family.

The polypeptide is Tripartite motif-containing protein 64 (TRIM64) (Homo sapiens (Human)).